The sequence spans 332 residues: Junctional sarcoplasmic reticulum protein 1 (332 aa).

Residues 1–80 (MTTRGLEDLD…EKELAGKEST (80 aa)) are mediates interaction with CACNA1S. Disordered stretches follow at residues 1-125 (MTTR…PWGD) and 159-332 (APHP…KGRD). A Phosphothreonine modification is found at T51. A compositionally biased stretch (basic and acidic residues) spans 66–76 (GLKKMEKELAG). Pro residues-rich tracts occupy residues 98-116 (QAPP…PPRT) and 177-197 (APKP…PGPP). The segment covering 221 to 232 (GGSISEASGEES) has biased composition (low complexity). Phosphoserine is present on residues S223 and S228. Basic and acidic residues-rich tracts occupy residues 239-256 (GSQE…EKLK) and 283-307 (RRWE…EHGK).

As to quaternary structure, interacts with CACNA1S, CACNB1 and calsequestrin. Specifically expressed in skeletal muscle. Detected in skeletal muscle and tongue (at protein level).

It is found in the sarcoplasmic reticulum membrane. It localises to the endoplasmic reticulum membrane. Involved in skeletal muscle excitation/contraction coupling (EC), probably acting as a regulator of the voltage-sensitive calcium channel CACNA1S. EC is a physiological process whereby an electrical signal (depolarization of the plasma membrane) is converted into a chemical signal, a calcium gradient, by the opening of ryanodine receptor calcium release channels. May regulate CACNA1S membrane targeting and activity. This chain is Junctional sarcoplasmic reticulum protein 1 (Jsrp1), found in Mus musculus (Mouse).